The chain runs to 189 residues: Crossover junction endodeoxyribonuclease RuvC (189 aa).

Catalysis depends on residues Asp7, Glu68, and Asp141. The Mg(2+) site is built by Asp7, Glu68, and Asp141.

This sequence belongs to the RuvC family. As to quaternary structure, homodimer which binds Holliday junction (HJ) DNA. The HJ becomes 2-fold symmetrical on binding to RuvC with unstacked arms; it has a different conformation from HJ DNA in complex with RuvA. In the full resolvosome a probable DNA-RuvA(4)-RuvB(12)-RuvC(2) complex forms which resolves the HJ. The cofactor is Mg(2+).

The protein localises to the cytoplasm. It carries out the reaction Endonucleolytic cleavage at a junction such as a reciprocal single-stranded crossover between two homologous DNA duplexes (Holliday junction).. Its function is as follows. The RuvA-RuvB-RuvC complex processes Holliday junction (HJ) DNA during genetic recombination and DNA repair. Endonuclease that resolves HJ intermediates. Cleaves cruciform DNA by making single-stranded nicks across the HJ at symmetrical positions within the homologous arms, yielding a 5'-phosphate and a 3'-hydroxyl group; requires a central core of homology in the junction. The consensus cleavage sequence is 5'-(A/T)TT(C/G)-3'. Cleavage occurs on the 3'-side of the TT dinucleotide at the point of strand exchange. HJ branch migration catalyzed by RuvA-RuvB allows RuvC to scan DNA until it finds its consensus sequence, where it cleaves and resolves the cruciform DNA. In Nocardia farcinica (strain IFM 10152), this protein is Crossover junction endodeoxyribonuclease RuvC.